A 60-amino-acid polypeptide reads, in one-letter code: Large ribosomal subunit protein uL30 (60 aa).

The protein belongs to the universal ribosomal protein uL30 family. Part of the 50S ribosomal subunit.

In Desulforapulum autotrophicum (strain ATCC 43914 / DSM 3382 / VKM B-1955 / HRM2) (Desulfobacterium autotrophicum), this protein is Large ribosomal subunit protein uL30.